A 577-amino-acid polypeptide reads, in one-letter code: Pentatricopeptide repeat-containing protein At1g63400 (577 aa).

15 PPR repeats span residues glycine 49–proline 83, serine 84–histidine 118, asparagine 119–proline 153, serine 154–proline 188, aspartate 189–proline 223, asparagine 224–alanine 258, asparagine 259–proline 293, asparagine 294–proline 328, asparagine 329–proline 363, aspartate 364–proline 398, asparagine 399–glycine 433, asparagine 434–proline 468, asparagine 469–proline 503, threonine 504–proline 538, and aspartate 539–proline 573.

Belongs to the PPR family. P subfamily.

The protein is Pentatricopeptide repeat-containing protein At1g63400 of Arabidopsis thaliana (Mouse-ear cress).